The sequence spans 174 residues: NADH-quinone oxidoreductase subunit B 1 (174 aa).

[4Fe-4S] cluster-binding residues include cysteine 38, cysteine 39, cysteine 104, and cysteine 133.

Belongs to the complex I 20 kDa subunit family. In terms of assembly, NDH-1 is composed of 14 different subunits. Subunits NuoB, C, D, E, F, and G constitute the peripheral sector of the complex. It depends on [4Fe-4S] cluster as a cofactor.

The protein localises to the cell membrane. It carries out the reaction a quinone + NADH + 5 H(+)(in) = a quinol + NAD(+) + 4 H(+)(out). Functionally, NDH-1 shuttles electrons from NADH, via FMN and iron-sulfur (Fe-S) centers, to quinones in the respiratory chain. The immediate electron acceptor for the enzyme in this species is believed to be ubiquinone. Couples the redox reaction to proton translocation (for every two electrons transferred, four hydrogen ions are translocated across the cytoplasmic membrane), and thus conserves the redox energy in a proton gradient. The chain is NADH-quinone oxidoreductase subunit B 1 from Chloroflexus aggregans (strain MD-66 / DSM 9485).